The chain runs to 88 residues: Acylphosphatase (88 aa).

An Acylphosphatase-like domain is found at 3-88; it reads AARFVVSGVV…VPPTEDFVTG (86 aa). Active-site residues include arginine 18 and asparagine 36.

The protein belongs to the acylphosphatase family.

The catalysed reaction is an acyl phosphate + H2O = a carboxylate + phosphate + H(+). This Xanthomonas oryzae pv. oryzae (strain MAFF 311018) protein is Acylphosphatase (acyP).